Consider the following 584-residue polypeptide: MPNYAIFRFEKHKTVGTIKAASLHMTRGRETQNADPDRKELNEILKGSTDPSADVKSMLNKIQKETGKPLRKNGVQAIELFFGMSPEWSKQATPEKLEHWKTITQQWAEQTFGENNLVSLQLHADETTPHLTGFMVPRDPDTGRLNASRWFDGRKALSALQTGYAASMEPLGLARGVKGSKATHQRVQRHYGNINKTLQLDPKIQAPIPPSIFTNKEEWAEKERLKAQKSALSVIQPLADKAARYVEEKKRADRAEEALSLARRKADSMRAIPLSDVLKTLGMELDPADKKQWRDPEHRFRITIDNYKFYDHSAQKGGGGAIDLLMHTTGQDYKGALSWLADRFGDETARHDMLLNDLYRSKIRINEAKQRPAFKQPEHKNEPKIREFLNSRGISFNNIPDSIRTDDRGNVAFLMYDDKDTLQGAELRGTSSGFKGLALGSSREAHFTGSINVKNDEKYDLYIAESAIDAISVVGFLSPEKIKAGVKLLSTSGVRTSLTKTLRKIVEKASSVHIAYDWDAVGQRAASLLVGAIKAAFPTKKVENWLPPKEQMIHGKDWNDLLMVKRGLKKTVAPKQTVKRKIRF.

One can recognise a Toprim domain in the interval 459–548; that stretch reads YDLYIAESAI…TKKVENWLPP (90 aa).

This chain is 65 kDa protein, found in Zymomonas mobilis subsp. mobilis (strain ATCC 10988 / DSM 424 / LMG 404 / NCIMB 8938 / NRRL B-806 / ZM1).